The chain runs to 419 residues: MTTQLEQAWELAKQRFAAVGIDVEEALRQLDRLPVSMHCWQGDDVSGFENPEGSLTGGIQATGNYPGKARNASELRADLEQAMRLIPGPKRLNLHAIYLESDTPVARDQIKPEHFKNWVEWAKTNQLGLDFNPSCFSHPLSADGFTLSHADDSIRQFWIDHCKASRRVSAYFGEQLGTPSVMNIWIPDGMKDITVDRLAPRQRLLAALDEVISEKLDPAHHIDAVESKLFGIGAESYTVGSNEFYMGYATSRQTALCLDAGHFHPTEVISDKISAAMLYVPQLLLHVSRPVRWDSDHVVLLDDETQAIASEIVRHDLFDRVHIGLDFFDASINRIAAWVIGTRNMKKALLRALLEPTAELRKLEAAGDYTARLALLEEQKSLPWQAVWKMYCQRHDTPAGSEWLENVRAYEKEILSRRG.

Positions 262, 294, and 296 each coordinate Mn(2+).

Belongs to the rhamnose isomerase family. As to quaternary structure, homotetramer. Mn(2+) is required as a cofactor.

Its subcellular location is the cytoplasm. The catalysed reaction is L-rhamnopyranose = L-rhamnulose. It participates in carbohydrate degradation; L-rhamnose degradation; glycerone phosphate from L-rhamnose: step 1/3. In terms of biological role, catalyzes the interconversion of L-rhamnose and L-rhamnulose. This is L-rhamnose isomerase from Escherichia coli O6:H1 (strain CFT073 / ATCC 700928 / UPEC).